Reading from the N-terminus, the 528-residue chain is Protein spinster homolog 1 (528 aa).

The disordered stretch occupies residues 1–49 (MAGSDTAPFLSQADDPDDGPVPGTPGLPGSTGNPKSEEPEVPDQEGLQR). Position 2 is an N-acetylalanine (A2). A run of 12 helical transmembrane segments spans residues 50-70 (ITGLSPGRSALIVAVLCYINL), 98-118 (GLIQTVFISSYMVLAPVFGYL), 127-147 (LMCGGIAFWSLVTLGSSFIPG), 160-180 (VGVGEASYSTIAPTLIADLFV), 187-207 (MLSIFYFAIPVGSGLGYIAGS), 218-238 (WALRVTPGLGVVAVLLLFLVV), 278-298 (LGFTAVAFVTGSLALWAPAFL), 323-343 (LIFGLITCLTGVLGVGLGVEI), 357-377 (LVCATGLLGSAPFLFLSLACA), 381-401 (IVATYIFIFIGETLLSMNWAI), 421-441 (FQIVLSHLLGDAGSPYLIGLI), and 465-485 (MLCAFVGALGGAAFLGTAIFI). Position 518 is a phosphoserine (S518).

Belongs to the major facilitator superfamily. Spinster (TC 2.A.1.49) family. In terms of assembly, interacts with BCL2 and BCL2L1.

It localises to the lysosome membrane. It is found in the mitochondrion inner membrane. It carries out the reaction a 1-acyl-sn-glycero-3-phosphocholine(out) + H(+)(out) = a 1-acyl-sn-glycero-3-phosphocholine(in) + H(+)(in). The catalysed reaction is 1-hexadecanoyl-sn-glycero-3-phosphocholine(out) + H(+)(out) = 1-hexadecanoyl-sn-glycero-3-phosphocholine(in) + H(+)(in). It catalyses the reaction 1-(9Z-octadecenoyl)-sn-glycero-3-phosphocholine(out) + H(+)(out) = 1-(9Z-octadecenoyl)-sn-glycero-3-phosphocholine(in) + H(+)(in). The enzyme catalyses 1-(5Z,8Z,11Z,14Z-eicosatetraenoyl)-sn-glycero-3-phosphocholine(out) + H(+)(out) = 1-(5Z,8Z,11Z,14Z-eicosatetraenoyl)-sn-glycero-3-phosphocholine(in) + H(+)(in). It carries out the reaction 1-(4Z,7Z,10Z,13Z,16Z,19Z-docosahexaenoyl)-sn-glycero-3-phosphocholine(out) + H(+)(out) = 1-(4Z,7Z,10Z,13Z,16Z,19Z-docosahexaenoyl)-sn-glycero-3-phosphocholine(in) + H(+)(in). The catalysed reaction is a 1-acyl-sn-glycero-3-phosphoethanolamine(out) + H(+)(out) = a 1-acyl-sn-glycero-3-phosphoethanolamine(in) + H(+)(in). It catalyses the reaction 1-(9Z-octadecenoyl)-sn-glycero-3-phosphoethanolamine(out) + H(+)(out) = 1-(9Z-octadecenoyl)-sn-glycero-3-phosphoethanolamine(in) + H(+)(in). The enzyme catalyses 1-acyl-sn-glycero-3-phospho-(1'-sn-glycerol)(out) + H(+)(out) = 1-acyl-sn-glycero-3-phospho-(1'-sn-glycerol)(in) + H(+)(in). It carries out the reaction 1-(9Z-octadecenoyl)-sn-glycero-3-phospho-(1'-sn-glycerol)(out) + H(+)(out) = 1-(9Z-octadecenoyl)-sn-glycero-3-phospho-(1'-sn-glycerol)(in) + H(+)(in). The catalysed reaction is a 1-O-(1Z-alkenyl)-sn-glycero-3-phosphocholine(out) + H(+)(out) = a 1-O-(1Z-alkenyl)-sn-glycero-3-phosphocholine(in) + H(+)(in). It catalyses the reaction 1-(1Z-hexadecenyl)-sn-glycero-3-phosphocholine(out) + H(+)(out) = 1-(1Z-hexadecenyl)-sn-glycero-3-phosphocholine(in) + H(+)(in). The enzyme catalyses a 1-O-(1Z-alkenyl)-sn-glycero-3-phosphoethanolamine(out) + H(+)(out) = a 1-O-(1Z-alkenyl)-sn-glycero-3-phosphoethanolamine(in) + H(+)(in). It carries out the reaction 1-O-(1Z-hexadecenyl)-sn-glycero-3-phosphoethanolamine(out) + H(+)(out) = 1-O-(1Z-hexadecenyl)-sn-glycero-3-phosphoethanolamine(in) + H(+)(in). In terms of biological role, plays a critical role in the phospholipid salvage pathway from lysosomes to the cytosol. Mediates the rate-limiting, proton-dependent, lysosomal efflux of lysophospholipids, which can then be reacylated by acyltransferases in the endoplasmic reticulum to form phospholipids. Selective for zwitterionic headgroups such as lysophosphatidylcholine (LPC) and lysophosphatidylethanolamine (LPE), can also transport lysophosphatidylglycerol (LPG), but not other anionic lysophospholipids, sphingosine, nor sphingomyelin. Transports lysophospholipids with saturated, monounsaturated, and polyunsaturated fatty acids, such as 1-hexadecanoyl-sn-glycero-3-phosphocholine, 1-(9Z-octadecenoyl)-sn-glycero-3-phosphocholine and 1-(4Z,7Z,10Z,13Z,16Z,19Z-docosahexaenoyl)-sn-glycero-3-phosphocholine, respectively. Can also transport lysoplasmalogen (LPC with a fatty alcohol) such as 1-(1Z-hexadecenyl)-sn-glycero-3-phosphocholine. Lysosomal LPC could function as intracellular signaling messenger. Essential player in lysosomal homeostasis. Crucial for cell survival under conditions of nutrient limitation. May be involved in necrotic or autophagic cell death. The chain is Protein spinster homolog 1 (SPNS1) from Homo sapiens (Human).